The chain runs to 657 residues: Glycogen debranching enzyme (657 aa).

Aspartate 336 serves as the catalytic Nucleophile. The Proton donor role is filled by glutamate 371. Basic and acidic residues predominate over residues 458-467; the sequence is NEANGEENRD. The disordered stretch occupies residues 458 to 479; it reads NEANGEENRDGTNNNYSNNHGK.

This sequence belongs to the glycosyl hydrolase 13 family.

The enzyme catalyses Hydrolysis of (1-&gt;6)-alpha-D-glucosidic linkages to branches with degrees of polymerization of three or four glucose residues in limit dextrin.. The protein operates within glycan degradation; glycogen degradation. In terms of biological role, removes maltotriose and maltotetraose chains that are attached by 1,6-alpha-linkage to the limit dextrin main chain, generating a debranched limit dextrin. The polypeptide is Glycogen debranching enzyme (Escherichia coli (strain SE11)).